Here is an 87-residue protein sequence, read N- to C-terminus: Putative BTB/POZ domain-containing protein At3g29740 (87 aa).

Positions 24–87 constitute a BTB domain; that stretch reads VDVRLKAGDS…KHTELVALVE (64 aa).

It functions in the pathway protein modification; protein ubiquitination. Its function is as follows. May act as a substrate-specific adapter of an E3 ubiquitin-protein ligase complex (CUL3-RBX1-BTB) which mediates the ubiquitination and subsequent proteasomal degradation of target proteins. This chain is Putative BTB/POZ domain-containing protein At3g29740, found in Arabidopsis thaliana (Mouse-ear cress).